We begin with the raw amino-acid sequence, 264 residues long: Small ribosomal subunit protein eS1 (264 aa).

Basic and acidic residues predominate over residues 236–255 (GEGGSGKRGEAGDKSERPEG). The disordered stretch occupies residues 236–264 (GEGGSGKRGEAGDKSERPEGYEPPVQESV).

Belongs to the eukaryotic ribosomal protein eS1 family. Component of the small ribosomal subunit. Mature ribosomes consist of a small (40S) and a large (60S) subunit. The 40S subunit contains about 33 different proteins and 1 molecule of RNA (18S). The 60S subunit contains about 49 different proteins and 3 molecules of RNA (28S, 5.8S and 5S).

It localises to the cytoplasm. The polypeptide is Small ribosomal subunit protein eS1 (Spodoptera frugiperda (Fall armyworm)).